The primary structure comprises 270 residues: 4-hydroxy-tetrahydrodipicolinate reductase (270 aa).

Residues 9–14 and Glu-35 each bind NAD(+); that span reads GAGGRM. Position 36 (Arg-36) interacts with NADP(+). Residues 99–101 and 123–126 each bind NAD(+); these read GTT and ASNY. Residue His-156 is the Proton donor/acceptor of the active site. A (S)-2,3,4,5-tetrahydrodipicolinate-binding site is contributed by His-157. Lys-160 functions as the Proton donor in the catalytic mechanism. 166-167 is a binding site for (S)-2,3,4,5-tetrahydrodipicolinate; it reads GT.

The protein belongs to the DapB family.

Its subcellular location is the cytoplasm. It catalyses the reaction (S)-2,3,4,5-tetrahydrodipicolinate + NAD(+) + H2O = (2S,4S)-4-hydroxy-2,3,4,5-tetrahydrodipicolinate + NADH + H(+). The catalysed reaction is (S)-2,3,4,5-tetrahydrodipicolinate + NADP(+) + H2O = (2S,4S)-4-hydroxy-2,3,4,5-tetrahydrodipicolinate + NADPH + H(+). It participates in amino-acid biosynthesis; L-lysine biosynthesis via DAP pathway; (S)-tetrahydrodipicolinate from L-aspartate: step 4/4. In terms of biological role, catalyzes the conversion of 4-hydroxy-tetrahydrodipicolinate (HTPA) to tetrahydrodipicolinate. The protein is 4-hydroxy-tetrahydrodipicolinate reductase of Actinobacillus succinogenes (strain ATCC 55618 / DSM 22257 / CCUG 43843 / 130Z).